The primary structure comprises 500 residues: MLRLMHPFSAQPNEGVGLYILWTVAVLFVIFKLLAPAKCDLPTVNGRRRFEIGQYQARRRFALDGRGIILNGLRKARAFRVVSQKGPKIILGPEFADEVKSHPACNADVFIAKEFHAHVSGFEVLRPQQVMKDAIRLKLTRSIGVLMKPMSAETALILETQWGNSDCWHELDLKSTIASLVSRVSAVMFVGEELGRDQKWLSIVTNYSSDMFVADLDLCKWPEALRPIATYFLSSCGKLRRHIREAALMLDPILSERYSAPHNKHNFLDWFEEVAGGRKYNPVLAQLSLAAAAIDTTSDLIIQTLTDICRFRDSGKLQQDLREEMVRVLRADGWEKSAMYNLKLLDSVLKETQRVKPVVVFGMGRYVTEQMTLHDGTVIPQGETINVVNTRVWDSAVYPNPLEWDPYRFVRRRDSGDHAAHLVSPTPDHMGFGLGKHSCPGRFFAATKIKILLCHILLKYDVKISDEASSTVVSSGNFLFPDATLSFCVRRRQDNLTIWG.

The chain crosses the membrane as a helical span at residues 15–35; sequence GVGLYILWTVAVLFVIFKLLA. Cys439 lines the heme pocket.

It belongs to the cytochrome P450 family. Heme serves as cofactor.

The protein localises to the membrane. It participates in secondary metabolite biosynthesis; terpenoid biosynthesis. Functionally, cytochrome P450 monooxygenase; part of the gene cluster that mediates the biosynthesis of calidodehydroaustin, a fungal meroterpenoid. The first step of the pathway is the synthesis of 3,5-dimethylorsellinic acid by the polyketide synthase ausA. 3,5-dimethylorsellinic acid is then prenylated by the polyprenyl transferase ausN. Further epoxidation by the FAD-dependent monooxygenase ausM and cyclization by the probable terpene cyclase ausL lead to the formation of protoaustinoid A. Protoaustinoid A is then oxidized to spiro-lactone preaustinoid A3 by the combined action of the FAD-binding monooxygenases ausB and ausC, and the dioxygenase ausE. Acid-catalyzed keto-rearrangement and ring contraction of the tetraketide portion of preaustinoid A3 by ausJ lead to the formation of preaustinoid A4. The aldo-keto reductase ausK, with the help of ausH, is involved in the next step by transforming preaustinoid A4 into isoaustinone which is in turn hydroxylated by the P450 monooxygenase ausI to form austinolide. The cytochrome P450 monooxygenase ausG modifies austinolide to austinol. Austinol is further acetylated to austin by the O-acetyltransferase ausP, which spontaneously changes to dehydroaustin. The cytochrome P450 monooxygenase ausR then converts dehydroaustin is into 7-dehydrodehydroaustin. The hydroxylation catalyzed by ausR permits the O-acetyltransferase ausQ to add an additional acetyl group to the molecule, leading to the formation of acetoxydehydroaustin. The short chain dehydrogenase ausT catalyzes the reduction of the double bond present between carbon atoms 1 and 2 to convert 7-dehydrodehydroaustin into 1,2-dihydro-7-hydroxydehydroaustin. AusQ catalyzes not only an acetylation reaction but also the addition of the PKS ausV diketide product to 1,2-dihydro-7-hydroxydehydroaustin, forming precalidodehydroaustin. Finally, the iron/alpha-ketoglutarate-dependent dioxygenase converts precalidodehydroaustin into calidodehydroaustin. The chain is Cytochrome P450 monooxygenase ausR from Aspergillus calidoustus.